The chain runs to 430 residues: tRNA(Ile)-lysidine synthase (430 aa).

27–32 provides a ligand contact to ATP; it reads SGGSDS.

This sequence belongs to the tRNA(Ile)-lysidine synthase family.

The protein resides in the cytoplasm. The enzyme catalyses cytidine(34) in tRNA(Ile2) + L-lysine + ATP = lysidine(34) in tRNA(Ile2) + AMP + diphosphate + H(+). Ligates lysine onto the cytidine present at position 34 of the AUA codon-specific tRNA(Ile) that contains the anticodon CAU, in an ATP-dependent manner. Cytidine is converted to lysidine, thus changing the amino acid specificity of the tRNA from methionine to isoleucine. The polypeptide is tRNA(Ile)-lysidine synthase (Rickettsia felis (strain ATCC VR-1525 / URRWXCal2) (Rickettsia azadi)).